A 175-amino-acid chain; its full sequence is Gamma-crystallin B (175 aa).

Beta/gamma crystallin 'Greek key' domains are found at residues 2 to 40 (GKITFFEDRSFQGRCYECSSDCPNLQTYFSRCNSVRVDS) and 41 to 83 (GCWM…CLIP). Residues 84–88 (QHSGT) form a connecting peptide region. 2 consecutive Beta/gamma crystallin 'Greek key' domains span residues 89–129 (YRMR…NVME) and 130–172 (GCWV…RRVM).

It belongs to the beta/gamma-crystallin family.

Functionally, crystallins are the dominant structural components of the vertebrate eye lens. The polypeptide is Gamma-crystallin B (Crygb) (Mus musculus (Mouse)).